Consider the following 157-residue polypeptide: MSGIALSRLAQERKAWRKDHPFGFVAVPTKNPDGTMNLMNWECAIPGKKGTPWEGGLFKLRMLFKDDYPSSPPKCKFEPPLFHPNVYPSGTVCLSILEEDKDWRPAITIKQILLGIQELLNEPNIQDPAQAEAYTIYCQNRVEYEKRVRAQAKKFSP.

In terms of domain architecture, UBC core spans 4–157; the sequence is IALSRLAQER…VRAQAKKFSP (154 aa). Positions 13 to 18 are interaction with SUMO1; sequence RKAWRK. The Glycyl thioester intermediate role is filled by Cys93.

It belongs to the ubiquitin-conjugating enzyme family. As to quaternary structure, forms a tight complex with rangap1 and ranbp2. Interacts with vsx1.

It is found in the nucleus. Its pathway is protein modification; protein sumoylation. Accepts the ubiquitin-like proteins sumo1, sumo2 and sumo3 from the uble1a-uble1b E1 complex and catalyzes their covalent attachment to other proteins with the help of an E3 ligase such as ranbp2 or cbx4. Essential for nuclear architecture and chromosome segregation. Mediates nuclear localization of vsx1. Required for progression through mitosis during organogenesis. The sequence is that of SUMO-conjugating enzyme UBC9-B (ube2ib) from Danio rerio (Zebrafish).